The sequence spans 599 residues: Elongation factor 4 (599 aa).

Positions 2 to 184 constitute a tr-type G domain; sequence KHIRNFSIIA…RLVRDIPPPE (183 aa). GTP-binding positions include 14–19 and 131–134; these read DHGKST and NKID.

The protein belongs to the TRAFAC class translation factor GTPase superfamily. Classic translation factor GTPase family. LepA subfamily.

Its subcellular location is the cell inner membrane. It carries out the reaction GTP + H2O = GDP + phosphate + H(+). Its function is as follows. Required for accurate and efficient protein synthesis under certain stress conditions. May act as a fidelity factor of the translation reaction, by catalyzing a one-codon backward translocation of tRNAs on improperly translocated ribosomes. Back-translocation proceeds from a post-translocation (POST) complex to a pre-translocation (PRE) complex, thus giving elongation factor G a second chance to translocate the tRNAs correctly. Binds to ribosomes in a GTP-dependent manner. This Erwinia tasmaniensis (strain DSM 17950 / CFBP 7177 / CIP 109463 / NCPPB 4357 / Et1/99) protein is Elongation factor 4.